We begin with the raw amino-acid sequence, 262 residues long: Lens fiber major intrinsic protein (262 aa).

The Cytoplasmic portion of the chain corresponds to 1-9 (MRELRSSSF). The chain crosses the membrane as a helical span at residues 10–29 (WRAILAEFLGSLLYTLLGLG). The Extracellular portion of the chain corresponds to 30-41 (ASLRWAPGPHGV). The chain crosses the membrane as a helical span at residues 42-59 (LGSALAFGLAQATLVQAL). Residues 60 to 61 (GH) are Cytoplasmic-facing. An intramembrane region (discontinuously helical) is located at residues 62–77 (VSGGHINPAITLAFLL). Residues 68-70 (NPA) carry the NPA 1 motif. Over 78–82 (ASQLS) the chain is Cytoplasmic. Residues 83–106 (LPRALGYLLAQLLGALAGAGVLYG) traverse the membrane as a helical segment. At 107 to 127 (VTPAAVRGTLGLSALHPSVGP) the chain is on the extracellular side. The chain crosses the membrane as a helical span at residues 128–148 (GQGTVVELLLTAQFILCVFAS). Over 149 to 156 (FDDRHDGR) the chain is Cytoplasmic. Residues 157 to 175 (PGSAALPVGFSLALGHLFG) form a helical membrane-spanning segment. Over 176 to 178 (IPF) the chain is Extracellular. The segment at residues 179-193 (TGAGMNPARSFAPAV) is an intramembrane region (discontinuously helical). The NPA 2 motif lies at 184–186 (NPA). The Extracellular segment spans residues 194–200 (ITRNFTN). Residues 201 to 222 (HWVFWAGPLLGAALAALLYELA) traverse the membrane as a helical segment. The Cytoplasmic segment spans residues 223-262 (LCPRARSMAERLAVLRGEPPAAAPPPEPPAEPLELKTQGL). Residues 227-237 (ARSMAERLAVL) form an interaction with CALM region. The interval 240-262 (EPPAAAPPPEPPAEPLELKTQGL) is disordered. Positions 243–253 (AAAPPPEPPAE) are enriched in pro residues.

The protein belongs to the MIP/aquaporin (TC 1.A.8) family. As to quaternary structure, homotetramer; each monomer provides an independent water pore. Two homotetramers on opposing membranes can dimerize, forming a cell-cell junction. Interacts with CALM; the calcium-calmodulin/CALM complex interacts with the cytoplasmic domains of two aquaporins, leading to channel closure. During early stages of lens development, interacts through its C-terminal region with Cx56 and GJA8/Cx45.6. Major component of lens fiber gap junctions.

Its subcellular location is the cell membrane. The protein localises to the cell junction. It catalyses the reaction H2O(in) = H2O(out). Its activity is regulated as follows. The water channel activity is inhibited by calcium through calmodulin/CALM. In terms of biological role, aquaporins form homotetrameric transmembrane channels, with each monomer independently mediating water transport across the plasma membrane along its osmotic gradient. Specifically expressed in lens fiber cells, this aquaporin is crucial for maintaining lens water homeostasis and transparency. Beyond water permeability, it also acts as a cell-to-cell adhesion molecule, forming thin junctions between lens fiber cells that are essential for maintaining the ordered structure and transparency of the lens. This chain is Lens fiber major intrinsic protein, found in Gallus gallus (Chicken).